A 239-amino-acid chain; its full sequence is Probable transcriptional regulatory protein BCQ_0605 (239 aa).

It belongs to the TACO1 family. YeeN subfamily.

Its subcellular location is the cytoplasm. In Bacillus cereus (strain Q1), this protein is Probable transcriptional regulatory protein BCQ_0605.